The following is a 355-amino-acid chain: MTNSSALSPSSSAVAPRPGALARWLWAVALLVIIVVGVGGITRLTESGLSITEWRPVSGVLPPLNEADWVREFEKYKQIPEYKEINLGMTLAGFKAIFFWEWLHRILGRVVGMALVVPFVWYAWRRAIPAGYGWRLFALTALVGLQGAIGWWMVASGLEYRTDVSHYRLAAHLLTALFLLAGLVWTARDLGALARDPGAPPARLTGAAIGVIAILFVQLLLGAWVAGLNAGYVSSSWPLMNDHFVPEGIDWSGGAWLALTNDPFLIHFLHRWWSWAAAGALLLLARTLARRGARAEACALVIVVAAQMLLGIWTIVSGVSMWVAVMHQVVGAILVAVTAAALHRLGRRSAITEVS.

8 consecutive transmembrane segments (helical) span residues 21–41 (LARW…VGGI), 85–102 (INLG…FWEW), 136–156 (LFAL…MVAS), 173–193 (LLTA…LGAL), 208–228 (AIGV…VAGL), 264–284 (FLIH…LLLL), 299–319 (ALVI…VSGV), and 322–342 (WVAV…AAAL). His-270 lines the heme pocket. Heme is bound at residue His-327.

This sequence belongs to the COX15/CtaA family. Type 2 subfamily. In terms of assembly, interacts with CtaB. The cofactor is heme b.

It localises to the cell membrane. The catalysed reaction is Fe(II)-heme o + 2 A + H2O = Fe(II)-heme a + 2 AH2. Its pathway is porphyrin-containing compound metabolism; heme A biosynthesis; heme A from heme O: step 1/1. In terms of biological role, catalyzes the conversion of heme O to heme A by two successive hydroxylations of the methyl group at C8. The first hydroxylation forms heme I, the second hydroxylation results in an unstable dihydroxymethyl group, which spontaneously dehydrates, resulting in the formyl group of heme A. The sequence is that of Heme A synthase from Sphingopyxis alaskensis (strain DSM 13593 / LMG 18877 / RB2256) (Sphingomonas alaskensis).